A 262-amino-acid polypeptide reads, in one-letter code: Hydroxyethylthiazole kinase (262 aa).

M44 is a binding site for substrate. 2 residues coordinate ATP: R118 and S166. G193 lines the substrate pocket.

This sequence belongs to the Thz kinase family. Mg(2+) serves as cofactor.

It catalyses the reaction 5-(2-hydroxyethyl)-4-methylthiazole + ATP = 4-methyl-5-(2-phosphooxyethyl)-thiazole + ADP + H(+). It functions in the pathway cofactor biosynthesis; thiamine diphosphate biosynthesis; 4-methyl-5-(2-phosphoethyl)-thiazole from 5-(2-hydroxyethyl)-4-methylthiazole: step 1/1. Catalyzes the phosphorylation of the hydroxyl group of 4-methyl-5-beta-hydroxyethylthiazole (THZ). This is Hydroxyethylthiazole kinase from Chlamydia abortus (strain DSM 27085 / S26/3) (Chlamydophila abortus).